We begin with the raw amino-acid sequence, 284 residues long: RNase adapter protein RapZ (284 aa).

8–15 (GRSGSGKS) is an ATP binding site. A GTP-binding site is contributed by 56–59 (DVRN). The tract at residues 266 to 284 (RSRGKNVQSRHRTLEKRKP) is RNA-binding.

This sequence belongs to the RapZ-like family. RapZ subfamily. As to quaternary structure, homotrimer.

Its function is as follows. Modulates the synthesis of GlmS, by affecting the processing and stability of the regulatory small RNA GlmZ. When glucosamine-6-phosphate (GlcN6P) concentrations are high in the cell, RapZ binds GlmZ and targets it to cleavage by RNase E. Consequently, GlmZ is inactivated and unable to activate GlmS synthesis. Under low GlcN6P concentrations, RapZ is sequestered and inactivated by an other regulatory small RNA, GlmY, preventing GlmZ degradation and leading to synthesis of GlmS. The protein is RNase adapter protein RapZ of Escherichia coli O1:K1 / APEC.